A 66-amino-acid polypeptide reads, in one-letter code: Large ribosomal subunit protein bL33c (66 aa).

This sequence belongs to the bacterial ribosomal protein bL33 family.

The protein resides in the plastid. The protein localises to the chloroplast. The polypeptide is Large ribosomal subunit protein bL33c (Aethionema grandiflorum (Persian stone-cress)).